Reading from the N-terminus, the 298-residue chain is Cytidine deaminase (298 aa).

2 CMP/dCMP-type deaminase domains span residues 47–167 and 186–298; these read TEQQ…FGPS and DSDD…PLLG. Substrate is bound at residue 88 to 90; that stretch reads NLE. A Zn(2+)-binding site is contributed by histidine 101. Glutamate 103 serves as the catalytic Proton donor. Positions 128 and 131 each coordinate Zn(2+).

This sequence belongs to the cytidine and deoxycytidylate deaminase family. As to quaternary structure, homodimer. Requires Zn(2+) as cofactor.

It carries out the reaction cytidine + H2O + H(+) = uridine + NH4(+). The catalysed reaction is 2'-deoxycytidine + H2O + H(+) = 2'-deoxyuridine + NH4(+). Its function is as follows. This enzyme scavenges exogenous and endogenous cytidine and 2'-deoxycytidine for UMP synthesis. In Shewanella frigidimarina (strain NCIMB 400), this protein is Cytidine deaminase.